The sequence spans 398 residues: Putative tyrosine-protein phosphatase C15H7.3 (398 aa).

A compositionally biased stretch (basic residues) spans 1-15 (MERSQKSARKKKKTS). The segment at 1–114 (MERSQKSARK…EPWSEEEPAK (114 aa)) is disordered. Positions 18–40 (GNDRSIRSERKSKQKKPAGEKSQ) are enriched in basic and acidic residues. Basic residues predominate over residues 41-50 (KSRRTRKSRG). Polar residues predominate over residues 55–73 (GFTSRETIQPSSSGQSEGT). The span at 74 to 114 (TRMDDQKDEKKDDKKEEKKEERKEEKKEEVKEPWSEEEPAK) shows a compositional bias: basic and acidic residues. In terms of domain architecture, Tyrosine-protein phosphatase spans 125 to 376 (TNVGGTFKQT…GTVHRSMACW (252 aa)).

This sequence belongs to the protein-tyrosine phosphatase family. Non-receptor class subfamily.

The enzyme catalyses O-phospho-L-tyrosyl-[protein] + H2O = L-tyrosyl-[protein] + phosphate. The chain is Putative tyrosine-protein phosphatase C15H7.3 from Caenorhabditis elegans.